The chain runs to 641 residues: Choline O-acetyltransferase (641 aa).

At serine 17 the chain carries Phosphoserine. The Proton acceptor role is filled by histidine 335. Serine 366 is modified (phosphoserine). Residues 413–425 (GKTFIKKQKCSPD), serine 451, and glutamine 552 contribute to the CoA site. A disordered region spans residues 615-641 (CSSRQPADSKPPTAKERARGPSQAKQS).

This sequence belongs to the carnitine/choline acetyltransferase family.

The enzyme catalyses choline + acetyl-CoA = acetylcholine + CoA. Functionally, catalyzes the reversible synthesis of acetylcholine (ACh) from acetyl CoA and choline at cholinergic synapses. The chain is Choline O-acetyltransferase (Chat) from Mus musculus (Mouse).